A 180-amino-acid chain; its full sequence is Adenine phosphoribosyltransferase (180 aa).

Position 2 is an N-acetylserine (serine 2). Phosphoserine is present on residues serine 4, serine 15, and serine 30. Tyrosine 60 is modified (phosphotyrosine). Serine 66 carries the post-translational modification Phosphoserine. The residue at position 114 (lysine 114) is an N6-acetyllysine. Threonine 135 is modified (phosphothreonine).

The protein belongs to the purine/pyrimidine phosphoribosyltransferase family. As to quaternary structure, homodimer.

Its subcellular location is the cytoplasm. The catalysed reaction is AMP + diphosphate = 5-phospho-alpha-D-ribose 1-diphosphate + adenine. It participates in purine metabolism; AMP biosynthesis via salvage pathway; AMP from adenine: step 1/1. Functionally, catalyzes a salvage reaction resulting in the formation of AMP, that is energically less costly than de novo synthesis. In Rattus norvegicus (Rat), this protein is Adenine phosphoribosyltransferase.